The chain runs to 209 residues: T-cell surface glycoprotein CD8 beta chain (209 aa).

The N-terminal stretch at 1–21 (MRPRMWLLLSAQLAALHGNSV) is a signal peptide. In terms of domain architecture, Ig-like V-type spans 22-131 (LQQTPAYIMV…TLIFGTGTQL (110 aa)). The Extracellular portion of the chain corresponds to 22-169 (LQQTPAYIMV…ETRKGPLCSP (148 aa)). An intrachain disulfide couples Cys-41 to Cys-115. The N-linked (GlcNAc...) asparagine glycan is linked to Asn-101. Residues 170–190 (ITLSLLVAGILVLLVSLGVAI) form a helical membrane-spanning segment. The Cytoplasmic portion of the chain corresponds to 191–209 (HLYCRQRRARLRFMKQFYK).

As to quaternary structure, forms disulfide-linked heterodimers with CD8A at the cell surface. Interacts with CD3D; this interaction couples TCR-CD3 with CD8. Interacts with LCK. In terms of processing, phosphorylated as a consequence of T-cell activation. Palmitoylated at the cytoplasmic tail and thereby targets the heterodimer CD8A/CD8B to lipid rafts unlike CD8A homodimers.

It is found in the cell membrane. Its function is as follows. Integral membrane glycoprotein that plays an essential role in the immune response and serves multiple functions in responses against both external and internal offenses. In T-cells, functions primarily as a coreceptor for MHC class I molecule:peptide complex. The antigens presented by class I peptides are derived from cytosolic proteins while class II derived from extracellular proteins. Interacts simultaneously with the T-cell receptor (TCR) and the MHC class I proteins presented by antigen presenting cells (APCs). In turn, recruits the Src kinase LCK to the vicinity of the TCR-CD3 complex. A palmitoylation site in the cytoplasmic tail of CD8B chain contributes to partitioning of CD8 into the plasma membrane lipid rafts where signaling proteins are enriched. Once LCK recruited, it initiates different intracellular signaling pathways by phosphorylating various substrates ultimately leading to lymphokine production, motility, adhesion and activation of cytotoxic T-lymphocytes (CTLs). Additionally, plays a critical role in thymic selection of CD8+ T-cells. The sequence is that of T-cell surface glycoprotein CD8 beta chain (CD8B) from Saimiri sciureus (Common squirrel monkey).